Here is a 446-residue protein sequence, read N- to C-terminus: MTIYTFTSSEPHIAIVGGGIVGVILTLGLLRQNVSVRLYEQSAGFREIGAGIAFTASARRCMELMDPAIIDALRRCGAVSVSDKVADEDDHLRWIDGYNQHSKAHPTYQKPLAEICGSGFQGCRRDQLLEELAKHIPSGTIMFHKRLDTIQQGKDHKMILNFVDGSSNQADAVIGCDGIKSRVRQHLFGDNHPASFPQYTHKVAYRGLVPMDRAIEILGTWKAHNFHHHVGPGAHLTHYPVANHTALNVVVFLSDETPWPDSTTMVSKGTRSEVEKALQGWHPTVLGIVNLLPDELSKWALFDQGEFPLPHYSKGRICLAGDAAHASSPHHGAGACLGVEDALCLSTLLSQVRTTLTQADEGSKDKSESSMGQLLEAAFETFNLVRRTRTQWLVNSSRRVCDLYHQQEWADPIRCPKAETCFEEIRDRSYKIWHFDVDGMLEQTRT.

Residues 10-30 (EPHIAIVGGGIVGVILTLGLL) traverse the membrane as a helical segment. N-linked (GlcNAc...) asparagine glycosylation is present at asparagine 33. FAD is bound by residues glutamate 40, alanine 53, and arginine 125. Catalysis depends on residues arginine 206 and tyrosine 239. N-linked (GlcNAc...) asparagine glycosylation occurs at asparagine 243. Residues aspartate 322 and alanine 335 each contribute to the FAD site. The N-linked (GlcNAc...) asparagine glycan is linked to asparagine 395.

The protein belongs to the paxM FAD-dependent monooxygenase family. FAD is required as a cofactor.

The protein resides in the membrane. The protein operates within secondary metabolite biosynthesis; terpenoid biosynthesis. In terms of biological role, FAD-dependent monooxygenase; part of the gene cluster that mediates the biosynthesis of eupenifeldin, a bistropolone meroterpenoid that acts as an antitumor agent. The first step of eupenifeldin biosynthesis is the biosynthesis of 3-methylorcinaldehyde performed by the non-reducing polyketide synthase eupA. Oxidative dearomatization of 3-methylorcinaldehyde likely catalyzed by the FAD-dependent monooxygenase eupB is followed by oxidative ring expansion by the 2-oxoglutarate-dependent dioxygenase eupC to provide the first tropolone metabolite, tropolone stipitaldehyde. In parallel, generation of sesquiterpene alpha-humulene from farnesylpyrophosphate (FPP) is catalyzed by the terpene cyclase eupE. The cytochrome P450 monooxygenase eupD then hydroxylates humulene to humulenol. The putative Diels-Alderase eupF probably catalyzes the formation of the tropolone-humulene skeleton by linking humulenol and the polyketide moiety. The short-chain dehydrogenase/reductase eupG and the flavin-dependent monooxygenase eupH are also essential for eupenifeldin biosynthesis and are likely the additional decorating enzymes of the tropolone-humulene skeleton to produce final eupenifeldin or derivatives. This is FAD-dependent monooxygenase eupB from Phoma sp.